The chain runs to 131 residues: Ribosome-binding factor A (131 aa).

The protein belongs to the RbfA family. In terms of assembly, monomer. Binds 30S ribosomal subunits, but not 50S ribosomal subunits or 70S ribosomes.

The protein localises to the cytoplasm. Functionally, one of several proteins that assist in the late maturation steps of the functional core of the 30S ribosomal subunit. Associates with free 30S ribosomal subunits (but not with 30S subunits that are part of 70S ribosomes or polysomes). Required for efficient processing of 16S rRNA. May interact with the 5'-terminal helix region of 16S rRNA. The chain is Ribosome-binding factor A from Pseudomonas fluorescens (strain SBW25).